The sequence spans 394 residues: NAD(P)H-quinone oxidoreductase subunit H (394 aa).

This sequence belongs to the complex I 49 kDa subunit family. In terms of assembly, NDH-1 can be composed of about 15 different subunits; different subcomplexes with different compositions have been identified which probably have different functions.

The protein localises to the cellular thylakoid membrane. The enzyme catalyses a plastoquinone + NADH + (n+1) H(+)(in) = a plastoquinol + NAD(+) + n H(+)(out). The catalysed reaction is a plastoquinone + NADPH + (n+1) H(+)(in) = a plastoquinol + NADP(+) + n H(+)(out). Its function is as follows. NDH-1 shuttles electrons from an unknown electron donor, via FMN and iron-sulfur (Fe-S) centers, to quinones in the respiratory and/or the photosynthetic chain. The immediate electron acceptor for the enzyme in this species is believed to be plastoquinone. Couples the redox reaction to proton translocation, and thus conserves the redox energy in a proton gradient. Cyanobacterial NDH-1 also plays a role in inorganic carbon-concentration. In Parasynechococcus marenigrum (strain WH8102), this protein is NAD(P)H-quinone oxidoreductase subunit H.